The following is an 852-amino-acid chain: Zinc finger and SCAN domain-containing protein 29 (852 aa).

Positions 18 to 100 (RQRFRRFHYQ…TLVEDLEREP (83 aa)) constitute an SCAN box domain. Disordered stretches follow at residues 96 to 182 (LERE…PKSG), 347 to 400 (ASHS…SAAP), and 502 to 557 (PNDG…RAPV). A Glycyl lysine isopeptide (Lys-Gly) (interchain with G-Cter in SUMO2) cross-link involves residue Lys112. Ser153 carries the post-translational modification Phosphoserine. Residue Lys180 forms a Glycyl lysine isopeptide (Lys-Gly) (interchain with G-Cter in SUMO2) linkage. Over residues 508 to 517 (ETASCPVQGT) the composition is skewed to polar residues. Positions 528–545 (EADEATEEDSDDDEEDTE) are enriched in acidic residues. Ser561 is modified (phosphoserine). Lys576 participates in a covalent cross-link: Glycyl lysine isopeptide (Lys-Gly) (interchain with G-Cter in SUMO2). The segment at 603-625 (QGKGNESDCRSGRQWAKTSGEKR) is disordered. A Glycyl lysine isopeptide (Lys-Gly) (interchain with G-Cter in SUMO2) cross-link involves residue Lys652. 6 consecutive C2H2-type zinc fingers follow at residues 678–700 (YKCA…RRIH), 706–728 (YKCL…RRIH), 734–756 (YQCG…QRTH), 762–784 (YQCE…RRIH), 790–812 (HVCP…HRTH), and 818–840 (YGCH…GEIH).

Belongs to the krueppel C2H2-type zinc-finger protein family.

It is found in the nucleus. In terms of biological role, may be involved in transcriptional regulation. In Homo sapiens (Human), this protein is Zinc finger and SCAN domain-containing protein 29 (ZSCAN29).